The primary structure comprises 318 residues: Methionyl-tRNA formyltransferase (318 aa).

(6S)-5,6,7,8-tetrahydrofolate is bound at residue 110–113 (SLLP).

It belongs to the Fmt family.

The enzyme catalyses L-methionyl-tRNA(fMet) + (6R)-10-formyltetrahydrofolate = N-formyl-L-methionyl-tRNA(fMet) + (6S)-5,6,7,8-tetrahydrofolate + H(+). Functionally, attaches a formyl group to the free amino group of methionyl-tRNA(fMet). The formyl group appears to play a dual role in the initiator identity of N-formylmethionyl-tRNA by promoting its recognition by IF2 and preventing the misappropriation of this tRNA by the elongation apparatus. The chain is Methionyl-tRNA formyltransferase from Lacticaseibacillus paracasei (strain ATCC 334 / BCRC 17002 / CCUG 31169 / CIP 107868 / KCTC 3260 / NRRL B-441) (Lactobacillus paracasei).